The sequence spans 608 residues: MWRLPGRSALRGVRSVVERRSRAEAGTHEAVRAMERAVVRCVPSEPKLSLSFALADGSHKNMQRDQSEPLGRALSRIATNALKGHAKVAAAKKSRKNRAHSSGGAACEATGPEPVATCEPVVKLYYREEAVAEDVLNVDAWQDGAVLQIGDVKYKVERNPPTFTELQLPRYIMAGFPVCPKLGVEFGDPASSVFRWYKEVKPGAAEPGDSGPASSSHSSQPSAWIETGVDERVYTPCNADIGLRLRLHCTPGNGQRFGPSRELESLCPVEAGPGTCTFDHRHLYTKKVTEDSFIRTVSYNILADTYAQTEFSRTVLYPYCAPYALELDYRQNLIQKELTGYNADLICLQEVDRAVFSDSLVPALEAFGLEGVFRIKQHEGLATFYRKSKFRLLSQHDISFQEALKSDPLHKELLEKLALNPLAQEKVLQRSSVLQISVLQSTTDSSKKICVANTHLYWHPKGGYIRLIQMEVALVHIRHVSRDLYPGIPVIFCGDFNSTPSTGMYHFVISGSIAEDHEDWASNGEEERCSMPLSHCFKLKSACGEPAYTNYVGGFHGCLDYIFIDLNTLEVEQVIPLPSHEEVTTHQALPSVSHPSDHIALVCDLKWK.

Residues 1–16 (MWRLPGRSALRGVRSV) constitute a mitochondrion transit peptide. Basic residues predominate over residues 90–99 (AAKKSRKNRA). Positions 90–111 (AAKKSRKNRAHSSGGAACEATG) are disordered. Phosphoserine is present on Ser-216. Residues Glu-350, Asp-495, and Asn-497 each coordinate Mg(2+). Asp-495 acts as the Proton donor/acceptor in catalysis.

This sequence belongs to the CCR4/nocturin family. The cofactor is Mg(2+).

Its subcellular location is the mitochondrion matrix. It carries out the reaction Exonucleolytic cleavage of poly(A) to 5'-AMP.. Enzyme that cleaves 2',5'-phosphodiester bond linking adenosines of the 5'-triphosphorylated oligoadenylates, triphosphorylated oligoadenylates referred as 2-5A modulates the 2-5A system. Degrades triphosphorylated 2-5A to produce AMP and ATP. Also cleaves 3',5'-phosphodiester bond of oligoadenylates. Plays a role as a negative regulator of the 2-5A system that is one of the major pathways for antiviral and antitumor functions induced by interferons (IFNs). Suppression of this enzyme increases cellular 2-5A levels and decreases viral replication in cultured small-airway epithelial cells. The sequence is that of 2',5'-phosphodiesterase 12 (Pde12) from Mus musculus (Mouse).